The chain runs to 610 residues: UvrABC system protein C (610 aa).

Positions S16–V94 constitute a GIY-YIG domain. The UVR domain occupies D204–V239.

It belongs to the UvrC family. As to quaternary structure, interacts with UvrB in an incision complex.

It localises to the cytoplasm. In terms of biological role, the UvrABC repair system catalyzes the recognition and processing of DNA lesions. UvrC both incises the 5' and 3' sides of the lesion. The N-terminal half is responsible for the 3' incision and the C-terminal half is responsible for the 5' incision. This Escherichia coli (strain ATCC 8739 / DSM 1576 / NBRC 3972 / NCIMB 8545 / WDCM 00012 / Crooks) protein is UvrABC system protein C.